Here is a 488-residue protein sequence, read N- to C-terminus: Signal recognition particle receptor FtsY (488 aa).

The tract at residues 14–82 is disordered; that stretch reads DTAPEDVSKP…AVPDDAVHGG (69 aa). Over residues 32 to 67 the composition is skewed to low complexity; the sequence is VGTSSTGSPVGTGAAMPAAQDAPSPAAPHAIATPDD. Residues 287 to 294, 369 to 373, and 433 to 436 each bind GTP; these read GVNGVGKT, DTAGR, and TKLD.

Belongs to the GTP-binding SRP family. FtsY subfamily. Part of the signal recognition particle protein translocation system, which is composed of SRP and FtsY. SRP is a ribonucleoprotein composed of Ffh and a 4.5S RNA molecule.

The protein localises to the cell inner membrane. It is found in the cytoplasm. The enzyme catalyses GTP + H2O = GDP + phosphate + H(+). Involved in targeting and insertion of nascent membrane proteins into the cytoplasmic membrane. Acts as a receptor for the complex formed by the signal recognition particle (SRP) and the ribosome-nascent chain (RNC). Interaction with SRP-RNC leads to the transfer of the RNC complex to the Sec translocase for insertion into the membrane, the hydrolysis of GTP by both Ffh and FtsY, and the dissociation of the SRP-FtsY complex into the individual components. This chain is Signal recognition particle receptor FtsY, found in Nitratidesulfovibrio vulgaris (strain ATCC 29579 / DSM 644 / CCUG 34227 / NCIMB 8303 / VKM B-1760 / Hildenborough) (Desulfovibrio vulgaris).